Reading from the N-terminus, the 112-residue chain is Gastrula zinc finger protein XlCGF16.1 (112 aa).

C2H2-type zinc fingers lie at residues 6–28 (YNCS…QKTH), 34–56 (FVCF…QRIH), 62–84 (FSCT…HKTH), and 90–112 (FLCF…HRTH).

The protein belongs to the krueppel C2H2-type zinc-finger protein family.

The protein localises to the nucleus. May be involved in transcriptional regulation. This is Gastrula zinc finger protein XlCGF16.1 from Xenopus laevis (African clawed frog).